The chain runs to 249 residues: ATP synthase subunit a (249 aa).

6 helical membrane passes run 30-50, 84-104, 114-134, 143-163, 193-213, and 220-240; these read SLYM…GSAG, FFPL…IGVI, LIVT…YGLY, VFVP…IEVI, FVTS…LPLA, and ILEV…TCIY.

The protein belongs to the ATPase A chain family. As to quaternary structure, F-type ATPases have 2 components, CF(1) - the catalytic core - and CF(0) - the membrane proton channel. CF(1) has five subunits: alpha(3), beta(3), gamma(1), delta(1), epsilon(1). CF(0) has three main subunits: a(1), b(2) and c(9-12). The alpha and beta chains form an alternating ring which encloses part of the gamma chain. CF(1) is attached to CF(0) by a central stalk formed by the gamma and epsilon chains, while a peripheral stalk is formed by the delta and b chains.

The protein localises to the cell inner membrane. In terms of biological role, key component of the proton channel; it plays a direct role in the translocation of protons across the membrane. The chain is ATP synthase subunit a from Afipia carboxidovorans (strain ATCC 49405 / DSM 1227 / KCTC 32145 / OM5) (Oligotropha carboxidovorans).